A 241-amino-acid polypeptide reads, in one-letter code: Trypsin-10 (241 aa).

An N-terminal signal peptide occupies residues 1–13 (MKSLIFVLLLGAV). The propeptide at 14–19 (FAEEDK) is activation peptide. A Peptidase S1 domain is found at 20 to 239 (IVGGYECTRH…LSGWVRDTMA (220 aa)). Disulfide bonds link C26-C155, C44-C60, C128-C228, C135-C201, C166-C180, and C191-C215. Catalysis depends on charge relay system residues H59 and D103. S195 (charge relay system) is an active-site residue.

The protein belongs to the peptidase S1 family.

The protein localises to the secreted. It localises to the extracellular space. The enzyme catalyses Preferential cleavage: Arg-|-Xaa, Lys-|-Xaa.. This is Trypsin-10 from Gadus morhua (Atlantic cod).